A 510-amino-acid polypeptide reads, in one-letter code: MGEKQLTKEEIKARKMEAKKEAEFNALVKERMQKLENLQEQGKDPFDVYKVERTHTSQQVKDNYDELEGKNVTVAGRLMSKRVHGKAGFSDIRDRYGKIQLYIKINDVGEEKLKEYKTFDIGDFVSITGTVFKTKTGEITLHILDFQLLSKSLKPLPEKFHGLKDPDLRYRQRYVDLIMNEDVKETFMKRTAIIKAIREFLDNRDFLEVETPILSPIAGGAAARPFITHHNALDIDMYLRIATELYLKRLIVGGFEKVYEIGKNFRNEGIDVRHNPEFTAIELYEAYADYNDMMEITENMVAYVCEKVNGTTKVMYEGTEIDFKPPWRRITMVDAVKEYAGVDFNEVKTDEEAREIAKSKELELKKELKDCTKGDILVALFEEFGEEKLMQPTFVCDYPKENSPLTKKKRGNDELTERFEGFVYGREICNAYSELNDPIVQKERFMQQLKERELGDDEAYMMDDDFINALEIGMPPTGGLGIGIDRLIMFLTDSSSIRDVILFPTMKPTK.

Positions 420 and 427 each coordinate Mg(2+).

This sequence belongs to the class-II aminoacyl-tRNA synthetase family. In terms of assembly, homodimer. The cofactor is Mg(2+).

The protein resides in the cytoplasm. It carries out the reaction tRNA(Lys) + L-lysine + ATP = L-lysyl-tRNA(Lys) + AMP + diphosphate. The chain is Lysine--tRNA ligase from Clostridium novyi (strain NT).